Reading from the N-terminus, the 164-residue chain is R-phycoerythrin alpha chain (164 aa).

Residues cysteine 82 and cysteine 139 each contribute to the (2R,3E)-phycoerythrobilin site.

This sequence belongs to the phycobiliprotein family. As to quaternary structure, heterodimer of an alpha and a beta chain. In terms of processing, contains two covalently linked bilin chromophores.

It is found in the plastid. It localises to the chloroplast thylakoid membrane. Functionally, light-harvesting photosynthetic bile pigment-protein from the phycobiliprotein complex. In Pyropia haitanensis (Red seaweed), this protein is R-phycoerythrin alpha chain (cpeA).